We begin with the raw amino-acid sequence, 396 residues long: Proton-coupled antiporter flippase LtaA (396 aa).

Helical transmembrane passes span 15 to 34 (FILMLIILFLMEFARGMYIL), 46 to 73 (IAVAITSLAFSIHFIADASTNFVIGFLL), 80 to 99 (IVLTTGFILAFTSLFLVIWF), 105 to 126 (VIIFSAMMLGIAVSPIWVIMLS), 138 to 159 (GYVYFSWLLGLLVGMVFMNLLI), 165 to 184 (RFAFMMSLVVLIAWILYYFV), 211 to 231 (LLLFPGILLQGAAIAALVPIL), 243 to 263 (TIEYTVAIIIGGIGCAVSMLF), 275 to 297 (FMYGVILSGFILYMILIFTLSMI), 303 to 326 (LWIIALAIGLMYGILLPAWNTFMA), 338 to 358 (WGVFNSIQGFGSMIGPLFGGL), and 370 to 390 (FYFSALIFLVLAVFYGSYFIV).

This sequence belongs to the major facilitator superfamily. LtaA family.

It is found in the cell membrane. It functions in the pathway cell wall biogenesis; lipoteichoic acid biosynthesis. Functionally, proton-coupled antiporter flippase that catalyzes the translocation, from the inner to the outer leaflet of the cell membrane, of the lipid-linked disaccharide (anchor-LLD) that anchors lipoteichoic acids (LTA) to the cell membrane. In Staphylococcus aureus (strain USA300), this protein is Proton-coupled antiporter flippase LtaA (ltaA).